We begin with the raw amino-acid sequence, 236 residues long: tRNA (guanine-N(7)-)-methyltransferase (236 aa).

S-adenosyl-L-methionine-binding residues include Asp-35, Glu-60, Asn-87, and Asp-113. Asp-113 is a catalytic residue. Substrate contacts are provided by Lys-117 and Asp-149.

Belongs to the class I-like SAM-binding methyltransferase superfamily. TrmB family.

It carries out the reaction guanosine(46) in tRNA + S-adenosyl-L-methionine = N(7)-methylguanosine(46) in tRNA + S-adenosyl-L-homocysteine. It functions in the pathway tRNA modification; N(7)-methylguanine-tRNA biosynthesis. Catalyzes the formation of N(7)-methylguanine at position 46 (m7G46) in tRNA. The sequence is that of tRNA (guanine-N(7)-)-methyltransferase from Prochlorococcus marinus (strain MIT 9303).